Reading from the N-terminus, the 54-residue chain is U7-ctenitoxin-Pk1a (54 aa).

Cystine bridges form between cysteine 3–cysteine 17, cysteine 10–cysteine 23, cysteine 14–cysteine 52, cysteine 16–cysteine 37, and cysteine 25–cysteine 35.

In terms of tissue distribution, expressed by the venom gland.

It is found in the secreted. Its function is as follows. Blocks voltage-gated sodium channels (Nav). Causes immediate spastic paralysis and death in mice within 1 minute of injection at dose levels of 1.5 ug per mouse. The protein is U7-ctenitoxin-Pk1a of Phoneutria keyserlingi (Brazilian wandering spider).